Consider the following 412-residue polypeptide: Phospholipase A1-IIdelta (412 aa).

N-acetylalanine is present on alanine 2. Catalysis depends on serine 238, which acts as the Acyl-ester intermediate. Catalysis depends on charge relay system residues serine 238, aspartate 297, and histidine 336.

This sequence belongs to the AB hydrolase superfamily. Lipase family. As to expression, expressed in leaves, stems, flowers and siliques, and, at low levels, in seeds and roots (at protein level).

The protein resides in the cytoplasm. In terms of biological role, acylhydrolase that catalyzes the hydrolysis of phosphatidylcholine (PC) at the sn-1 position. High activity toward PC, medium activity toward monogalactosyldiacylglycerol (MGDG) and low activity toward triacylglycerol (TAG). Confers sensitivity to UV-B radiation probably by deesterifying membrane phospholipids. The protein is Phospholipase A1-IIdelta of Arabidopsis thaliana (Mouse-ear cress).